The sequence spans 397 residues: Cathepsin E (397 aa).

Positions 1-20 (MKPLLVLLLLLLLDLAQAQG) are cleaved as a signal peptide. A propeptide spans 21-59 (ALHRVPLRRHQSLRKKLRAQGQLSEFWRSHNLDMTRLSE) (activation peptide). The Peptidase A1 domain occupies 79-393 (YFGTISIGTP…DRGNNQVGLA (315 aa)). N-linked (GlcNAc...) asparagine glycosylation is present at Asn91. Asp97 is a catalytic residue. Disulfide bonds link Cys110-Cys115 and Cys273-Cys277. The active site involves Asp282. The N-linked (GlcNAc...) asparagine glycan is linked to Asn323.

Belongs to the peptidase A1 family. In terms of assembly, homodimer; disulfide-linked. In terms of processing, glycosylated. The nature of the carbohydrate chain varies between cell types. In fibroblasts, the proenzyme contains a high mannose-type oligosaccharide, while the mature enzyme contains a complex-type oligosaccharide. As to expression, expressed abundantly in the stomach, club cells and alveolar macrophages of the lung, brain microglia, spleen and activated B-lymphocytes. Not expressed in resting B-lymphocytes.

The protein localises to the endosome. The catalysed reaction is Similar to cathepsin D, but slightly broader specificity.. Its function is as follows. May have a role in immune function. Probably involved in the processing of antigenic peptides during MHC class II-mediated antigen presentation. May play a role in activation-induced lymphocyte depletion in the thymus, and in neuronal degeneration and glial cell activation in the brain. This is Cathepsin E (Ctse) from Mus musculus (Mouse).